A 275-amino-acid polypeptide reads, in one-letter code: NH(3)-dependent NAD(+) synthetase (275 aa).

46–53 (GISGGQDS) serves as a coordination point for ATP. Asp-52 contributes to the Mg(2+) binding site. Arg-140 contacts deamido-NAD(+). Thr-160 is an ATP binding site. Glu-165 is a Mg(2+) binding site. Deamido-NAD(+) contacts are provided by Lys-173 and Asp-180. Residues Lys-189 and Thr-211 each contribute to the ATP site. Position 260–261 (260–261 (HK)) interacts with deamido-NAD(+).

This sequence belongs to the NAD synthetase family. As to quaternary structure, homodimer.

It carries out the reaction deamido-NAD(+) + NH4(+) + ATP = AMP + diphosphate + NAD(+) + H(+). It participates in cofactor biosynthesis; NAD(+) biosynthesis; NAD(+) from deamido-NAD(+) (ammonia route): step 1/1. In terms of biological role, catalyzes the ATP-dependent amidation of deamido-NAD to form NAD. Uses ammonia as a nitrogen source. This is NH(3)-dependent NAD(+) synthetase from Salmonella enteritidis PT4 (strain P125109).